The primary structure comprises 515 residues: 2,3-bisphosphoglycerate-independent phosphoglycerate mutase (515 aa).

Residues aspartate 14 and serine 64 each contribute to the Mn(2+) site. Serine 64 acts as the Phosphoserine intermediate in catalysis. Residues histidine 125, 155-156 (RD), arginine 187, arginine 193, 263-266 (RADR), and lysine 337 each bind substrate. Mn(2+) is bound by residues aspartate 404, histidine 408, aspartate 445, histidine 446, and histidine 464.

This sequence belongs to the BPG-independent phosphoglycerate mutase family. As to quaternary structure, monomer. It depends on Mn(2+) as a cofactor.

It carries out the reaction (2R)-2-phosphoglycerate = (2R)-3-phosphoglycerate. It participates in carbohydrate degradation; glycolysis; pyruvate from D-glyceraldehyde 3-phosphate: step 3/5. Catalyzes the interconversion of 2-phosphoglycerate and 3-phosphoglycerate. This chain is 2,3-bisphosphoglycerate-independent phosphoglycerate mutase, found in Yersinia pseudotuberculosis serotype O:1b (strain IP 31758).